Consider the following 394-residue polypeptide: Phosphoglycerate kinase (394 aa).

Substrate contacts are provided by residues 21–23, R36, 59–62, R113, and R146; these read DLN and HLGR. ATP-binding positions include K197, E319, and 345-348; that span reads GGDT.

It belongs to the phosphoglycerate kinase family. Monomer.

It is found in the cytoplasm. The enzyme catalyses (2R)-3-phosphoglycerate + ATP = (2R)-3-phospho-glyceroyl phosphate + ADP. It functions in the pathway carbohydrate degradation; glycolysis; pyruvate from D-glyceraldehyde 3-phosphate: step 2/5. This Halorhodospira halophila (strain DSM 244 / SL1) (Ectothiorhodospira halophila (strain DSM 244 / SL1)) protein is Phosphoglycerate kinase.